Here is a 344-residue protein sequence, read N- to C-terminus: MAMYTNQTAEELETWRCTSDGIFKSQNSIWMKINFVFVFILIFLTFYLSFKAARVLKNHNVYSKGSQILLMITLLNANLNQLIFLEIRIRHLVHIFINSEDPCKIEFHSPECTYDQTIYAFTSVMSTGLLSALTFDRFFALYASTVYVRNSKDSAYMLITVSIIVTVIVHIRTYGGVSRAGYVPSCTYPPQLSLNTYQVVNNAIFWIIMANCVLTIAVLLLNIYKDKRIKKSVFDTKTRYNSFENVLTTKAICSVTSTQFVFLSFSTAALAIIRTLEAGMSEEVFHINIQYINGGVYGNLSIPVLIYLKTNQCILQRRKSIDKMTNHTGTVDSHISSLKTAWET.

A run of 7 helical transmembrane segments spans residues S28–L48, Q67–I87, G128–V148, M157–V177, A203–I223, I252–I272, and I287–Y307.

It belongs to the nematode receptor-like protein sra family.

The protein localises to the membrane. In Caenorhabditis elegans, this protein is Serpentine receptor class alpha-27 (sra-27).